The primary structure comprises 303 residues: ASC1-like protein (303 aa).

Transmembrane regions (helical) follow at residues 19–39, 81–101, 127–147, 153–173, 212–232, and 255–275; these read YEDF…RFLL, CIYF…EPWF, ALYM…IFWE, FGVS…SYNI, YLCL…VLWS, and YIFN…WVLI. One can recognise a TLC domain in the interval 72–284; it reads RKFKESAWKC…IYRMLVKQIQ (213 aa).

The protein localises to the endoplasmic reticulum membrane. Mediates resistance to sphinganine-analog mycotoxins (SAMs) by restoring the sphingolipid biosynthesis. Could salvage the transport of GPI-anchored proteins from the endoplasmic reticulum to the Golgi apparatus in ceramides-depleted cells after SAM exposure. The protein is ASC1-like protein of Solanum lycopersicum (Tomato).